A 407-amino-acid polypeptide reads, in one-letter code: Probable tRNA sulfurtransferase (407 aa).

In terms of domain architecture, THUMP spans 61–165 (NEITYRLSKI…LDAIYMYEEV (105 aa)). ATP is bound by residues 183–184 (ML), 208–209 (HF), Arg265, Gly287, and Gln296.

The protein belongs to the ThiI family.

It is found in the cytoplasm. The catalysed reaction is [ThiI sulfur-carrier protein]-S-sulfanyl-L-cysteine + a uridine in tRNA + 2 reduced [2Fe-2S]-[ferredoxin] + ATP + H(+) = [ThiI sulfur-carrier protein]-L-cysteine + a 4-thiouridine in tRNA + 2 oxidized [2Fe-2S]-[ferredoxin] + AMP + diphosphate. It catalyses the reaction [ThiS sulfur-carrier protein]-C-terminal Gly-Gly-AMP + S-sulfanyl-L-cysteinyl-[cysteine desulfurase] + AH2 = [ThiS sulfur-carrier protein]-C-terminal-Gly-aminoethanethioate + L-cysteinyl-[cysteine desulfurase] + A + AMP + 2 H(+). It functions in the pathway cofactor biosynthesis; thiamine diphosphate biosynthesis. Catalyzes the ATP-dependent transfer of a sulfur to tRNA to produce 4-thiouridine in position 8 of tRNAs, which functions as a near-UV photosensor. Also catalyzes the transfer of sulfur to the sulfur carrier protein ThiS, forming ThiS-thiocarboxylate. This is a step in the synthesis of thiazole, in the thiamine biosynthesis pathway. The sulfur is donated as persulfide by IscS. The protein is Probable tRNA sulfurtransferase of Staphylococcus aureus (strain N315).